Here is a 286-residue protein sequence, read N- to C-terminus: ATP synthase gamma chain (286 aa).

This sequence belongs to the ATPase gamma chain family. F-type ATPases have 2 components, CF(1) - the catalytic core - and CF(0) - the membrane proton channel. CF(1) has five subunits: alpha(3), beta(3), gamma(1), delta(1), epsilon(1). CF(0) has three main subunits: a, b and c.

The protein resides in the cell inner membrane. Functionally, produces ATP from ADP in the presence of a proton gradient across the membrane. The gamma chain is believed to be important in regulating ATPase activity and the flow of protons through the CF(0) complex. The polypeptide is ATP synthase gamma chain (Pseudomonas putida (strain ATCC 700007 / DSM 6899 / JCM 31910 / BCRC 17059 / LMG 24140 / F1)).